A 126-amino-acid polypeptide reads, in one-letter code: MSIPADLKYTESHEWVRTEADGTLTVGITDHAQEALGDIVFFEVQQLGQTVSAGDTVAVIESVKAASDIYAPVSGEIIEANPNVADTPDAVNSAPYDNWLFKIKPADGASQDRLMDAAAYGKSIGE.

The region spanning 23-104 (TLTVGITDHA…PYDNWLFKIK (82 aa)) is the Lipoyl-binding domain. Lysine 64 is modified (N6-lipoyllysine).

It belongs to the GcvH family. The glycine cleavage system is composed of four proteins: P, T, L and H. It depends on (R)-lipoate as a cofactor.

Functionally, the glycine cleavage system catalyzes the degradation of glycine. The H protein shuttles the methylamine group of glycine from the P protein to the T protein. The polypeptide is Glycine cleavage system H protein (Paraburkholderia phymatum (strain DSM 17167 / CIP 108236 / LMG 21445 / STM815) (Burkholderia phymatum)).